The chain runs to 206 residues: Large ribosomal subunit protein mL62 (206 aa).

Residues 1–29 constitute a mitochondrion transit peptide; sequence MATAWCLPWTLRRAGAWLLTPPLRCPRRA.

It belongs to the prokaryotic/mitochondrial release factor family. Mitochondrion-specific ribosomal protein mL62 subfamily. In terms of assembly, component of the mitochondrial 39S ribosomal subunit.

The protein resides in the mitochondrion. It carries out the reaction an N-acyl-L-alpha-aminoacyl-tRNA + H2O = an N-acyl-L-amino acid + a tRNA + H(+). In terms of biological role, essential peptidyl-tRNA hydrolase component of the mitochondrial large ribosomal subunit. Acts as a codon-independent translation release factor that has lost all stop codon specificity and directs the termination of translation in mitochondrion, possibly in case of abortive elongation. May be involved in the hydrolysis of peptidyl-tRNAs that have been prematurely terminated and thus in the recycling of stalled mitochondrial ribosomes. The polypeptide is Large ribosomal subunit protein mL62 (Ailuropoda melanoleuca (Giant panda)).